We begin with the raw amino-acid sequence, 1183 residues long: M-phase phosphoprotein 9 (1183 aa).

3 disordered regions span residues G28 to T52, K300 to D334, and I472 to Q495. Residues Q324–D334 show a composition bias toward basic and acidic residues. Residues T401–E800 are required for its centrosomal localization. The tract at residues K451–T500 is interaction with CEP97. Over residues S483–Q495 the composition is skewed to low complexity. The stretch at D609–S804 forms a coiled coil. S781 is modified (phosphoserine; by TTBK2). Residue K784 forms a Glycyl lysine isopeptide (Lys-Gly) (interchain with G-Cter in ubiquitin) linkage. S788 is modified (phosphoserine; by TTBK2). The tract at residues N801–P1031 is interaction with KIF24. 2 disordered regions span residues L863 to P894 and N910 to H999. Residues S921–R936 are compositionally biased toward polar residues. Over residues L949–S967 the composition is skewed to low complexity. At S994 the chain carries Phosphoserine. Residues R1109–F1174 are a coiled coil.

In terms of assembly, interacts with CCP110, CEP97 and KIF24. In terms of processing, TTBK2-mediated phosphorylation at Ser-781 and Ser-788, promotes its ubiquitination at Lys-784 leading to proteasomal degradation, loss of MPHOSPH9 facilitates the removal of the CP110-CEP97 complex from the mother centrioles, promoting the initiation of ciliogenesis. Phosphorylated in M (mitotic) phase. Post-translationally, ubiquitinated at Lys-784, leading to proteasomal degradation.

The protein localises to the cytoplasm. The protein resides in the cytoskeleton. It is found in the microtubule organizing center. It localises to the centrosome. Its subcellular location is the centriole. The protein localises to the golgi apparatus membrane. Negatively regulates cilia formation by recruiting the CP110-CEP97 complex (a negative regulator of ciliogenesis) at the distal end of the mother centriole in ciliary cells. At the beginning of cilia formation, MPHOSPH9 undergoes TTBK2-mediated phosphorylation and degradation via the ubiquitin-proteasome system and removes itself and the CP110-CEP97 complex from the distal end of the mother centriole, which subsequently promotes cilia formation. This chain is M-phase phosphoprotein 9 (MPHOSPH9), found in Homo sapiens (Human).